A 164-amino-acid polypeptide reads, in one-letter code: Prolyl-tRNA editing protein ProX (164 aa).

Belongs to the PRORSD1 family.

Its subcellular location is the cytoplasm. Functionally, functions in trans to edit the amino acid moiety from incorrectly charged Ala-tRNA(Pro). Has weak activity on correctly charged tRNA(Ala), tRNA(Gly) as well as tRNA(Cys), tRNA(Met), tRNA(Pro), tRNA(Ser) and tRNA(Leu). The polypeptide is Prolyl-tRNA editing protein ProX (proX) (Acetoanaerobium sticklandii (strain ATCC 12662 / DSM 519 / JCM 1433 / CCUG 9281 / NCIMB 10654 / HF) (Clostridium sticklandii)).